Consider the following 236-residue polypeptide: Probable metal transport system ATP-binding protein CT_416 (236 aa).

Positions methionine 5–proline 236 constitute an ABC transporter domain. Glycine 39 to threonine 46 is an ATP binding site.

Belongs to the ABC transporter superfamily.

It is found in the cell inner membrane. In terms of biological role, part of an ATP-driven transport system CT_415/CT_416/CT_417 for a metal. Probably responsible for energy coupling to the transport system. The sequence is that of Probable metal transport system ATP-binding protein CT_416 from Chlamydia trachomatis serovar D (strain ATCC VR-885 / DSM 19411 / UW-3/Cx).